Consider the following 1359-residue polypeptide: Nuclear protein STH1/NPS1 (1359 aa).

Residue serine 38 is modified to Phosphoserine. The HSA domain occupies 307–383; it reads LERQQLLEKR…AKQRLAALKS (77 aa). The region spanning 482–647 is the Helicase ATP-binding domain; the sequence is VSLYNNHLNG…WALLNFVLPK (166 aa). 495–502 is a binding site for ATP; the sequence is DEMGLGKT. The short motif at 597–600 is the DEGH box element; the sequence is DEGH. The Helicase C-terminal domain occupies 795–956; sequence LLDRVLPKFK…NKSTAEEQEA (162 aa). Residues 1090-1246 form a disordered region; that stretch reads RERRRLRQNG…TAAKKTKTKS (157 aa). Polar residues predominate over residues 1108-1126; the sequence is LENTPEASETSLIENNSFT. Basic residues-rich tracts occupy residues 1143–1154 and 1198–1210; these read RSKRRSSRKKRT and KKKK…KIKL. Basic and acidic residues predominate over residues 1219-1232; sequence NDGKRAEEKPESKS. Residues 1233 to 1246 are compositionally biased toward basic residues; sequence PAKKTAAKKTKTKS. Residues 1257–1357 form the Bromo domain; the sequence is KLVEEMREQL…EFTDEWFKEH (101 aa).

This sequence belongs to the SNF2/RAD54 helicase family. Interacts directly with SFH1, CSE4, histones H3, H4 and H2B, and via its N-terminus, with RSC8. Interacts with LDB7, NPL6 and RTT102. Component of the two forms of the RSC complex composed of at least either RSC1 or RSC2, and ARP7, ARP9, LDB7, NPL6, RSC3, RSC30, RSC4, RSC58, RSC6, RSC8, RSC9, SFH1, STH1, HTL1 and probably RTT102. The complexes interact with histone and histone variant components of centromeric chromatin.

The protein localises to the nucleus. It catalyses the reaction ATP + H2O = ADP + phosphate + H(+). Its function is as follows. Catalytic component of the chromatin structure-remodeling complex (RSC), which is involved in transcription regulation and nucleosome positioning. RSC is responsible for the transfer of a histone octamer from a nucleosome core particle to naked DNA. The reaction requires ATP and involves an activated RSC-nucleosome intermediate. Remodeling reaction also involves DNA translocation, DNA twist and conformational change. As a reconfigurer of centromeric and flanking nucleosomes, RSC complex is required both for proper kinetochore function in chromosome segregation and, via a PKC1-dependent signaling pathway, for organization of the cellular cytoskeleton. This subunit is the essential ATPase of the complex. It is a DNA translocase capable of nucleosome remodeling. Required for full expression of early meiotic genes. Essential for mitotic growth and repression of CHA1 expression. Also involved in G2 phase control. The chain is Nuclear protein STH1/NPS1 (STH1) from Saccharomyces cerevisiae (strain ATCC 204508 / S288c) (Baker's yeast).